The chain runs to 128 residues: Large ribosomal subunit protein mL51 (128 aa).

The transit peptide at 1 to 31 (MAGNLLSGAGRRLWDWVPLACRSFSLGVPRL) directs the protein to the mitochondrion.

Belongs to the mitochondrion-specific ribosomal protein mL51 family. In terms of assembly, component of the mitochondrial large ribosomal subunit (mt-LSU). Mature mammalian 55S mitochondrial ribosomes consist of a small (28S) and a large (39S) subunit. The 28S small subunit contains a 12S ribosomal RNA (12S mt-rRNA) and 30 different proteins. The 39S large subunit contains a 16S rRNA (16S mt-rRNA), a copy of mitochondrial valine transfer RNA (mt-tRNA(Val)), which plays an integral structural role, and 52 different proteins. Interacts with OXA1L.

Its subcellular location is the mitochondrion. This chain is Large ribosomal subunit protein mL51 (MRPL51), found in Homo sapiens (Human).